We begin with the raw amino-acid sequence, 547 residues long: Chaperonin GroEL (547 aa).

ATP contacts are provided by residues 30-33 (TLGP), K51, 87-91 (DGTTT), G415, and D496.

Belongs to the chaperonin (HSP60) family. Forms a cylinder of 14 subunits composed of two heptameric rings stacked back-to-back. Interacts with the co-chaperonin GroES.

The protein localises to the cytoplasm. The enzyme catalyses ATP + H2O + a folded polypeptide = ADP + phosphate + an unfolded polypeptide.. Together with its co-chaperonin GroES, plays an essential role in assisting protein folding. The GroEL-GroES system forms a nano-cage that allows encapsulation of the non-native substrate proteins and provides a physical environment optimized to promote and accelerate protein folding. This is Chaperonin GroEL from Actinobacillus pleuropneumoniae serotype 7 (strain AP76).